Here is a 305-residue protein sequence, read N- to C-terminus: Non-homologous end joining protein Ku (305 aa).

A Ku domain is found at 16–202; that stretch reads SLVSFGISLI…KVDPEQLSLA (187 aa). The disordered stretch occupies residues 263–305; that stretch reads GEENGRKKSVSGAQHRSRRKSKGEQKLKVVRSGSSSDKRRKSA.

Belongs to the prokaryotic Ku family. In terms of assembly, homodimer. Interacts with LigD.

In terms of biological role, with LigD forms a non-homologous end joining (NHEJ) DNA repair enzyme, which repairs dsDNA breaks with reduced fidelity. Binds linear dsDNA with 5'- and 3'- overhangs but not closed circular dsDNA nor ssDNA. Recruits and stimulates the ligase activity of LigD. This Acidobacterium capsulatum (strain ATCC 51196 / DSM 11244 / BCRC 80197 / JCM 7670 / NBRC 15755 / NCIMB 13165 / 161) protein is Non-homologous end joining protein Ku.